The primary structure comprises 670 residues: ATP synthase subunit alpha 2 (670 aa).

180–187 contributes to the ATP binding site; that stretch reads GDRATGKT. The interval 525–670 is disordered; it reads MPAEDAAGDI…DAEAEARHKR (146 aa). Residues 543-588 are compositionally biased toward basic and acidic residues; that stretch reads ARGDADRDADHGANREVSREVSPEASREVSREVSREVSHEADRDAA. Positions 589-599 are enriched in low complexity; the sequence is ADAARVAGRAP. Basic and acidic residues predominate over residues 621–639; that stretch reads ADGDRASASRPPPDARGDA. The segment covering 650–661 has biased composition (low complexity); sequence ADANVNADANVD.

This sequence belongs to the ATPase alpha/beta chains family. F-type ATPases have 2 components, CF(1) - the catalytic core - and CF(0) - the membrane proton channel. CF(1) has five subunits: alpha(3), beta(3), gamma(1), delta(1), epsilon(1). CF(0) has three main subunits: a(1), b(2) and c(9-12). The alpha and beta chains form an alternating ring which encloses part of the gamma chain. CF(1) is attached to CF(0) by a central stalk formed by the gamma and epsilon chains, while a peripheral stalk is formed by the delta and b chains.

The protein resides in the cell inner membrane. The enzyme catalyses ATP + H2O + 4 H(+)(in) = ADP + phosphate + 5 H(+)(out). In terms of biological role, produces ATP from ADP in the presence of a proton gradient across the membrane. The alpha chain is a regulatory subunit. The chain is ATP synthase subunit alpha 2 from Burkholderia mallei (strain NCTC 10247).